An 800-amino-acid polypeptide reads, in one-letter code: Metabotropic glutamate receptor-like protein C (800 aa).

The signal sequence occupies residues 1–21; sequence MKMKIIFLILILIFSINIIKC. Topologically, residues 22-392 are extracellular; it reads DKEFKMLTLL…EVEFSQSLQY (371 aa). Residues Asn69, Asn107, Asn166, Asn258, Asn276, Asn302, and Asn345 are each glycosylated (N-linked (GlcNAc...) asparagine). A helical transmembrane segment spans residues 393-413; sequence GFSITTGVLIAITIIMMLGIV. Topologically, residues 414 to 426 are cytoplasmic; that stretch reads RYKSTPSIRSASP. A helical transmembrane segment spans residues 427–447; that stretch reads IFLNFILAGGIIVYIGIIVWV. Residues 448–463 are Extracellular-facing; that stretch reads GPANDHQCNARLWLVT. Residues 464–484 form a helical membrane-spanning segment; it reads LGFSTLIGSLVVKNFRIWLIF. Residues 485-499 lie on the Cytoplasmic side of the membrane; sequence DNPELKSISITNYQL. A helical transmembrane segment spans residues 500–520; that stretch reads FPWVGACLVINIILMSILTSV. The Extracellular segment spans residues 521-551; it reads GDLREIDAQGIDSLGKYEFMKVCKMNSSGAS. An N-linked (GlcNAc...) asparagine glycan is attached at Asn546. Residues 552-572 traverse the membrane as a helical segment; the sequence is TLYTILAYFAALLLVGVFVSW. At 573–586 the chain is on the cytoplasmic side; that stretch reads KIRIVDIQEFNESK. The chain crosses the membrane as a helical span at residues 587–607; that stretch reads AIANTLYAISFCLFVIVPLMI. Over 608–616 the chain is Extracellular; it reads SPQDKQSET. A helical transmembrane segment spans residues 617 to 637; that stretch reads IVLCTAGLFITTAALLIIFTP. The Cytoplasmic portion of the chain corresponds to 638–800; it reads KFWRVFTLGD…NDTEEEDKNQ (163 aa). Disordered regions lie at residues 658 to 694 and 718 to 800; these read QSNV…TETS and EFDD…DKNQ. Residues 718–732 are compositionally biased toward acidic residues; the sequence is EFDDNNIEQDNDNDN. The span at 733–774 shows a compositional bias: low complexity; it reads DNNNNNNNNNNNNNNNNNNNNNNNNNNNNNNNNNNNNNNNNN. Residues 781–791 show a composition bias toward basic and acidic residues; that stretch reads NDEKVEEKQQN.

This sequence in the N-terminal section; belongs to the BMP lipoprotein family. The protein in the C-terminal section; belongs to the G-protein coupled receptor 3 family. GABA-B receptor subfamily.

It localises to the membrane. This Dictyostelium discoideum (Social amoeba) protein is Metabotropic glutamate receptor-like protein C (grlC).